We begin with the raw amino-acid sequence, 399 residues long: Acetate kinase (399 aa).

Asn10 serves as a coordination point for Mg(2+). Lys17 serves as a coordination point for ATP. Arg91 contacts substrate. The active-site Proton donor/acceptor is Asp150. ATP contacts are provided by residues 210-214 (HLGNG), 285-287 (DFR), and 333-337 (GIGEN). Residue Glu387 coordinates Mg(2+).

The protein belongs to the acetokinase family. In terms of assembly, homodimer. Requires Mg(2+) as cofactor. It depends on Mn(2+) as a cofactor.

The protein localises to the cytoplasm. The enzyme catalyses acetate + ATP = acetyl phosphate + ADP. It participates in metabolic intermediate biosynthesis; acetyl-CoA biosynthesis; acetyl-CoA from acetate: step 1/2. Functionally, catalyzes the formation of acetyl phosphate from acetate and ATP. Can also catalyze the reverse reaction. The sequence is that of Acetate kinase from Wigglesworthia glossinidia brevipalpis.